A 471-amino-acid polypeptide reads, in one-letter code: Argininosuccinate lyase (471 aa).

The protein belongs to the lyase 1 family. Argininosuccinate lyase subfamily.

Its subcellular location is the cytoplasm. The catalysed reaction is 2-(N(omega)-L-arginino)succinate = fumarate + L-arginine. Its pathway is amino-acid biosynthesis; L-arginine biosynthesis; L-arginine from L-ornithine and carbamoyl phosphate: step 3/3. This Ehrlichia canis (strain Jake) protein is Argininosuccinate lyase.